The primary structure comprises 1574 residues: Synaptojanin-1 (1574 aa).

In terms of domain architecture, SAC spans 119–442 (VRKVLNSGNF…GDSISKIYAG (324 aa)). 2 positions are modified to phosphoserine: S820 and S830. Positions 894-971 (GTVLVSIKSS…RTITITLKSP (78 aa)) constitute an RRM domain. The span at 1029-1054 (HLQPSSSSGLGTSPSSSPRTSPCQSP) shows a compositional bias: low complexity. The disordered stretch occupies residues 1029–1327 (HLQPSSSSGL…GVKQEPTLKS (299 aa)). S1053 is modified (phosphoserine). Polar residues predominate over residues 1080–1100 (SSQGSPVDTQPAAQKDSSQTL). The segment covering 1105-1127 (PPPPRPVAPPARPAPPQRPPPPS) has biased composition (pro residues). 2 positions are modified to phosphoserine: S1147 and S1175. At R1198 the chain carries Omega-N-methylarginine. T1217 is modified (phosphothreonine). Pro residues predominate over residues 1268 to 1287 (TMPPSGPQPNLETPPQPPPR). Residues 1288-1307 (SRSSQSLPSDSSPQLQQEQP) are compositionally biased toward low complexity. S1290 and S1350 each carry phosphoserine. Residue T1354 is modified to Phosphothreonine. Disordered regions lie at residues 1363–1507 (LPSA…SVCP) and 1532–1574 (LPAR…FTER). 4 stretches are compositionally biased toward polar residues: residues 1364 to 1379 (PSAS…SVSC), 1393 to 1402 (QESMGSSANP), 1424 to 1436 (RVQS…TSWL), and 1472 to 1484 (DLQS…TSNP). Positions 1403–1425 (FPSLPCRNPFTDRTAAPGNPFRV) are 3 X 3 AA repeats of N-P-F. A compositionally biased stretch (pro residues) spans 1535-1548 (RRPPPPPPPVPLLP). The segment covering 1549–1563 (PGTTSSAGPSTTLPS) has biased composition (low complexity). The segment covering 1565 to 1574 (APSTLDFTER) has biased composition (polar residues).

It belongs to the synaptojanin family. This sequence in the central section; belongs to the inositol 1,4,5-trisphosphate 5-phosphatase family. Interacts with ASH/GRB2. Interacts with PACSIN1, PACSIN2 and PACSIN3. Interacts with AMPH, SH3GL1, SH3GL2 and SH3GL3. Interacts with MYO1E (via SH3 domain). Interacts with BIN1 and DNM1. Interacts with EPS15.

The protein localises to the cytoplasm. It is found in the perinuclear region. The enzyme catalyses a 1,2-diacyl-sn-glycero-3-phospho-(1D-myo-inositol-4,5-bisphosphate) + H2O = a 1,2-diacyl-sn-glycero-3-phospho-(1D-myo-inositol 4-phosphate) + phosphate. Phosphatase that acts on various phosphoinositides, including phosphatidylinositol 4-phosphate, phosphatidylinositol (4,5)-bisphosphate and phosphatidylinositol (3,4,5)-trisphosphate. Has a role in clathrin-mediated endocytosis. Hydrolyzes PIP2 bound to actin regulatory proteins resulting in the rearrangement of actin filaments downstream of tyrosine kinase and ASH/GRB2. This Mus musculus (Mouse) protein is Synaptojanin-1 (Synj1).